A 225-amino-acid chain; its full sequence is Cytidylate kinase (225 aa).

Position 11–19 (Gly-11–Thr-19) interacts with ATP.

The protein belongs to the cytidylate kinase family. Type 1 subfamily.

It is found in the cytoplasm. It catalyses the reaction CMP + ATP = CDP + ADP. It carries out the reaction dCMP + ATP = dCDP + ADP. This is Cytidylate kinase from Shouchella clausii (strain KSM-K16) (Alkalihalobacillus clausii).